The following is a 564-amino-acid chain: MQLAVRQEDADILLKQKNVLDELVVEKYRVAGQITQTALAYITSLINNSYHLQTSPKLTIQQLCLLTDSFLLKLLSRQYVNKVNEKGIAHPTTINVNQLLNGFSPEIDDEREFFLNQGDVVTISLGVHIDGYTSQVSHTLVIYPPSADAKPEGPLLGSNADALCACHLATESVVVLLGCSLSPEKLPANLKNVSNTVTGSQIRELVDAIADSFNCVVVPGSKIRRVRRFLAGQAEGIVAERDFKGVVWDESHQEARLLKQSNNTSTDLILSDSNKPVQTNNSSAIPTDDFVVVPGEVYQIDIRMTGLSDVNEIGIVTTEEIDHFTGKNNKQDFNAKSSIFIRDFAVTHQLKLKTSKKLLGEIDRQFSVYPFKLDYASKNFPINTESSEDEIKQQIAAIGQDMKSNRLGAAELSNRHLIQPKPIQTTKFIPLKEILLSANPTGKHGIDATKPVLPGMEIPLPNLGVSSLKLKSLLKTGRSINNVRESTTVAINENNQELIRLTGGEATAKSNWVHSQYKLPASLNETIGQLVQISKDKRFGIKIKEVVPYKVQQSNMSVESMQID.

It belongs to the peptidase M24 family. In terms of assembly, component of the nucleoplasmic and cytoplasmic pre-60S ribosomal particles.

It localises to the cytoplasm. The protein resides in the nucleus. In terms of biological role, probable metalloprotease involved in proper assembly of pre-ribosomal particles during the biogenesis of the 60S ribosomal subunit. Accompanies the pre-60S particles to the cytoplasm. The sequence is that of Probable metalloprotease ARX1 (ARX1) from Candida albicans (strain SC5314 / ATCC MYA-2876) (Yeast).